The chain runs to 907 residues: Protein translocase subunit SecA (907 aa).

Residues Gln86, 104–108 (GEGKT), and Asp511 each bind ATP. 2 stretches are compositionally biased toward basic and acidic residues: residues 838-856 (AQEE…HESV) and 869-888 (EEAP…KRND). Positions 838-907 (AQEEWKESMS…YKQCHGKVVD (70 aa)) are disordered. Cys890, Cys892, Cys901, and His902 together coordinate Zn(2+). A compositionally biased stretch (basic residues) spans 896 to 907 (KKYKQCHGKVVD).

It belongs to the SecA family. Monomer and homodimer. Part of the essential Sec protein translocation apparatus which comprises SecA, SecYEG and auxiliary proteins SecDF-YajC and YidC. Requires Zn(2+) as cofactor.

The protein resides in the cell inner membrane. It localises to the cytoplasm. It catalyses the reaction ATP + H2O + cellular proteinSide 1 = ADP + phosphate + cellular proteinSide 2.. Part of the Sec protein translocase complex. Interacts with the SecYEG preprotein conducting channel. Has a central role in coupling the hydrolysis of ATP to the transfer of proteins into and across the cell membrane, serving both as a receptor for the preprotein-SecB complex and as an ATP-driven molecular motor driving the stepwise translocation of polypeptide chains across the membrane. This Francisella philomiragia subsp. philomiragia (strain ATCC 25017 / CCUG 19701 / FSC 153 / O#319-036) protein is Protein translocase subunit SecA.